We begin with the raw amino-acid sequence, 347 residues long: Phosphoribosylformylglycinamidine cyclo-ligase (347 aa).

This sequence belongs to the AIR synthase family.

The protein resides in the cytoplasm. It catalyses the reaction 2-formamido-N(1)-(5-O-phospho-beta-D-ribosyl)acetamidine + ATP = 5-amino-1-(5-phospho-beta-D-ribosyl)imidazole + ADP + phosphate + H(+). The protein operates within purine metabolism; IMP biosynthesis via de novo pathway; 5-amino-1-(5-phospho-D-ribosyl)imidazole from N(2)-formyl-N(1)-(5-phospho-D-ribosyl)glycinamide: step 2/2. The sequence is that of Phosphoribosylformylglycinamidine cyclo-ligase from Desulfatibacillum aliphaticivorans.